The following is a 456-amino-acid chain: Exodeoxyribonuclease 7 large subunit (456 aa).

This sequence belongs to the XseA family. As to quaternary structure, heterooligomer composed of large and small subunits.

The protein resides in the cytoplasm. The catalysed reaction is Exonucleolytic cleavage in either 5'- to 3'- or 3'- to 5'-direction to yield nucleoside 5'-phosphates.. Bidirectionally degrades single-stranded DNA into large acid-insoluble oligonucleotides, which are then degraded further into small acid-soluble oligonucleotides. The protein is Exodeoxyribonuclease 7 large subunit of Shigella boydii serotype 18 (strain CDC 3083-94 / BS512).